Reading from the N-terminus, the 125-residue chain is Fluoride-specific ion channel FluC (125 aa).

A run of 4 helical transmembrane segments spans residues 1 to 21, 32 to 52, 68 to 88, and 101 to 121; these read MIQA…RYYV, AFPW…GVFA, LLIT…LDAI, and IYIA…LAVM. Positions 75 and 78 each coordinate Na(+).

It belongs to the fluoride channel Fluc/FEX (TC 1.A.43) family.

The protein localises to the cell inner membrane. It carries out the reaction fluoride(in) = fluoride(out). With respect to regulation, na(+) is not transported, but it plays an essential structural role and its presence is essential for fluoride channel function. In terms of biological role, fluoride-specific ion channel. Important for reducing fluoride concentration in the cell, thus reducing its toxicity. This chain is Fluoride-specific ion channel FluC, found in Rhizobium johnstonii (strain DSM 114642 / LMG 32736 / 3841) (Rhizobium leguminosarum bv. viciae).